The chain runs to 590 residues: Aspartate--tRNA(Asp/Asn) ligase (590 aa).

Residue Glu173 coordinates L-aspartate. The aspartate stretch occupies residues 197–200 (QIFK). Arg219 serves as a coordination point for L-aspartate. Residues 219–221 (RDE) and Gln228 contribute to the ATP site. L-aspartate is bound at residue His450. Glu484 provides a ligand contact to ATP. Arg491 serves as a coordination point for L-aspartate. 536–539 (GLDR) contacts ATP.

Belongs to the class-II aminoacyl-tRNA synthetase family. Type 1 subfamily. Homodimer.

The protein resides in the cytoplasm. It catalyses the reaction tRNA(Asx) + L-aspartate + ATP = L-aspartyl-tRNA(Asx) + AMP + diphosphate. Its function is as follows. Aspartyl-tRNA synthetase with relaxed tRNA specificity since it is able to aspartylate not only its cognate tRNA(Asp) but also tRNA(Asn). Reaction proceeds in two steps: L-aspartate is first activated by ATP to form Asp-AMP and then transferred to the acceptor end of tRNA(Asp/Asn). This is Aspartate--tRNA(Asp/Asn) ligase from Coxiella burnetii (strain RSA 493 / Nine Mile phase I).